Reading from the N-terminus, the 269-residue chain is Tryptophan synthase alpha chain (269 aa).

Catalysis depends on proton acceptor residues Glu49 and Asp60.

This sequence belongs to the TrpA family. In terms of assembly, tetramer of two alpha and two beta chains.

The enzyme catalyses (1S,2R)-1-C-(indol-3-yl)glycerol 3-phosphate + L-serine = D-glyceraldehyde 3-phosphate + L-tryptophan + H2O. It participates in amino-acid biosynthesis; L-tryptophan biosynthesis; L-tryptophan from chorismate: step 5/5. The alpha subunit is responsible for the aldol cleavage of indoleglycerol phosphate to indole and glyceraldehyde 3-phosphate. In Actinobacillus pleuropneumoniae serotype 7 (strain AP76), this protein is Tryptophan synthase alpha chain.